A 1024-amino-acid polypeptide reads, in one-letter code: Error-prone DNA polymerase (1024 aa).

Belongs to the DNA polymerase type-C family. DnaE2 subfamily.

It is found in the cytoplasm. The catalysed reaction is DNA(n) + a 2'-deoxyribonucleoside 5'-triphosphate = DNA(n+1) + diphosphate. Its function is as follows. DNA polymerase involved in damage-induced mutagenesis and translesion synthesis (TLS). It is not the major replicative DNA polymerase. The polypeptide is Error-prone DNA polymerase (Vibrio vulnificus (strain YJ016)).